A 211-amino-acid chain; its full sequence is Histidine biosynthesis bifunctional protein HisIE (211 aa).

The tract at residues 1–122 (MSFKTAEVSS…DPQEESQMVW (122 aa)) is phosphoribosyl-AMP cyclohydrolase. The tract at residues 123–211 (LHQLEQLLAA…VINKLKERHK (89 aa)) is phosphoribosyl-ATP pyrophosphohydrolase.

It in the N-terminal section; belongs to the PRA-CH family. This sequence in the C-terminal section; belongs to the PRA-PH family.

It localises to the cytoplasm. The enzyme catalyses 1-(5-phospho-beta-D-ribosyl)-ATP + H2O = 1-(5-phospho-beta-D-ribosyl)-5'-AMP + diphosphate + H(+). It carries out the reaction 1-(5-phospho-beta-D-ribosyl)-5'-AMP + H2O = 1-(5-phospho-beta-D-ribosyl)-5-[(5-phospho-beta-D-ribosylamino)methylideneamino]imidazole-4-carboxamide. Its pathway is amino-acid biosynthesis; L-histidine biosynthesis; L-histidine from 5-phospho-alpha-D-ribose 1-diphosphate: step 2/9. It participates in amino-acid biosynthesis; L-histidine biosynthesis; L-histidine from 5-phospho-alpha-D-ribose 1-diphosphate: step 3/9. This chain is Histidine biosynthesis bifunctional protein HisIE, found in Vibrio vulnificus (strain CMCP6).